Here is a 465-residue protein sequence, read N- to C-terminus: Coumaroyl-CoA:anthocyanidin 3-O-glucoside-6''-O-coumaroyltransferase 2 (465 aa).

Methionine 1 bears the N-acetylmethionine mark. Residues histidine 173 and aspartate 406 each act as proton acceptor in the active site.

This sequence belongs to the plant acyltransferase family. In terms of tissue distribution, highly expressed in flowers, and leaves. Lower levels of expression in stems, roots and siliques.

Functionally, involved in the acylation of the 6'' position of the 3-O-glucose residue of anthocyanin. Also able to use flavonol 3-glucosides as the acyl acceptor. The protein is Coumaroyl-CoA:anthocyanidin 3-O-glucoside-6''-O-coumaroyltransferase 2 (3AT2) of Arabidopsis thaliana (Mouse-ear cress).